The primary structure comprises 265 residues: Ribosomal RNA small subunit methyltransferase A (265 aa).

S-adenosyl-L-methionine-binding residues include histidine 13, leucine 15, glycine 40, glutamate 61, aspartate 85, and asparagine 103.

Belongs to the class I-like SAM-binding methyltransferase superfamily. rRNA adenine N(6)-methyltransferase family. RsmA subfamily.

The protein localises to the cytoplasm. The enzyme catalyses adenosine(1518)/adenosine(1519) in 16S rRNA + 4 S-adenosyl-L-methionine = N(6)-dimethyladenosine(1518)/N(6)-dimethyladenosine(1519) in 16S rRNA + 4 S-adenosyl-L-homocysteine + 4 H(+). Its function is as follows. Specifically dimethylates two adjacent adenosines (A1518 and A1519) in the loop of a conserved hairpin near the 3'-end of 16S rRNA in the 30S particle. May play a critical role in biogenesis of 30S subunits. This Bordetella pertussis (strain Tohama I / ATCC BAA-589 / NCTC 13251) protein is Ribosomal RNA small subunit methyltransferase A.